Consider the following 316-residue polypeptide: MHVIVPYTDVSPKTRLNSILTASERTAFAQAMLYDVISTLQSNGHTVELLIPTETVMQATDQRDQETIIDSTGVSTEAVSTSTSTHADTTEHNAASDNYVSQSPTHTLSVTPEAIMRILRDDDDPDNEASTQERDGDKEYIDITVDTAQNQIQSNQIVVTADDRALTPAVNSCLNRLSDTETPFSELAVVMADLALITPTAIERLFAREGDIVLAPGRGGGTNAIVVRHPAFRVDYHGTSYRDHYQAATDASLSVGVVDSMRLGTDIDKPTDLPEVLLHNNGMSSVWLQSAGIELNLDDNTGRVGITRKRKNEDVD.

The span at 72–85 shows a compositional bias: low complexity; the sequence is TGVSTEAVSTSTST. Disordered regions lie at residues 72–107 and 119–138; these read TGVS…PTHT and LRDD…DGDK. A compositionally biased stretch (polar residues) spans 92–107; that stretch reads HNAASDNYVSQSPTHT.

This sequence belongs to the CofC family. Homodimer.

It catalyses the reaction (2S)-2-phospholactate + GTP + H(+) = (2S)-lactyl-2-diphospho-5'-guanosine + diphosphate. The protein operates within cofactor biosynthesis; coenzyme F420 biosynthesis. In terms of biological role, guanylyltransferase that catalyzes the activation of (2S)-2-phospholactate (2-PL) as (2S)-lactyl-2-diphospho-5'-guanosine, via the condensation of 2-PL with GTP. It is involved in the biosynthesis of coenzyme F420, a hydride carrier cofactor. This Haloquadratum walsbyi (strain DSM 16790 / HBSQ001) protein is 2-phospho-L-lactate guanylyltransferase.